A 251-amino-acid chain; its full sequence is MNNLELEQLINQKLSSDKINDYAPNGLQVEGKTEIKKIITGVTASQALINYAISQNADAILVHHGYFWKSETPCIRGMKGKRIKALLVNDINLYGYHLPLDVHPELGNNAQLAKLLDIENLQPLEKGSVSIPVWGELKEPMTGKDFAEKIEKVLNRKPLICIENGPHLIRKIGICTGGGQGYIDLAAEQGCDAFITGEVSEQTIHSAREQGLYFFSAGHHATERYGIKALGEWLAKEYGFDVEFKDIDNPA.

A divalent metal cation is bound by residues histidine 63, histidine 64, aspartate 101, histidine 219, and glutamate 223.

It belongs to the GTP cyclohydrolase I type 2/NIF3 family. Toroid-shaped homohexamer. In the hexamer, 3 dimers assemble to form a ring-like structure surrounding a central hole.

This Haemophilus influenzae (strain ATCC 51907 / DSM 11121 / KW20 / Rd) protein is GTP cyclohydrolase 1 type 2 homolog.